The sequence spans 957 residues: Vacuolar membrane protease (957 aa).

Residues 1 to 10 (MARYNPFSFT) lie on the Cytoplasmic side of the membrane. The chain crosses the membrane as a helical span at residues 11–31 (PGPVVFFTTVIYVGLFAALLV). Topologically, residues 32–369 (THLTVPDYPS…RVFVVFQLHT (338 aa)) are vacuolar. N-linked (GlcNAc...) asparagine glycans are attached at residues asparagine 48, asparagine 105, and asparagine 136. Residues histidine 152 and aspartate 164 each coordinate Zn(2+). Glutamate 198 (proton acceptor) is an active-site residue. The Zn(2+) site is built by glutamate 199, glutamate 224, and histidine 297. A helical membrane pass occupies residues 370-390 (LFALCVTLLVVAPIALIGLTF). At 391–423 (GLSKADKNYLLARKAFVYSSDDDNPVQLYGWRG) the chain is on the cytoplasmic side. The chain crosses the membrane as a helical span at residues 424–444 (FFRFPIVFVSATAVVVALAYL). The Vacuolar segment spans residues 445 to 450 (LVRFNA). The helical transmembrane segment at 451-471 (FIIYSSPFAVWSMMLSAWFFV) threads the bilayer. Over 472 to 490 (AWFFSRGADAMRPSALQRM) the chain is Cytoplasmic. The helical transmembrane segment at 491 to 511 (YALIWLFIGSFVLLTIITVFV) threads the bilayer. Over 512–521 (NNYQVVAGYP) the chain is Vacuolar. Residues 522–542 (ALFYFAVVFAALMLSYLELFF) form a helical membrane-spanning segment. Over 543–642 (APTKSAYARH…YPGEQEWSGK (100 aa)) the chain is Cytoplasmic. 2 disordered regions span residues 560–591 (RRNS…DATE) and 603–628 (FTRY…RRLD). The segment covering 564 to 577 (ESASRPLTGSTTAA) has biased composition (polar residues). A helical transmembrane segment spans residues 643 to 663 (LPSWIWIIQLLLLAPLVIVLV). At 664-685 (GQVALLLTSALYQTPSDGNSPL) the chain is on the vacuolar side. The helical transmembrane segment at 686–706 (FIYLAIAALSVLLLAPTGPFI) threads the bilayer. At 707–713 (HRFTYHV) the chain is on the cytoplasmic side. A helical membrane pass occupies residues 714–734 (PTFLFLVCLATVIYNLVAFPF). Residues 735–957 (SRDHRLKVYF…LVEGFKQFEI (223 aa)) lie on the Vacuolar side of the membrane. 3 N-linked (GlcNAc...) asparagine glycosylation sites follow: asparagine 782, asparagine 818, and asparagine 834.

It belongs to the peptidase M28 family. Zn(2+) is required as a cofactor.

The protein resides in the vacuole membrane. Its function is as follows. May be involved in vacuolar sorting and osmoregulation. This is Vacuolar membrane protease from Pyrenophora tritici-repentis (strain Pt-1C-BFP) (Wheat tan spot fungus).